Consider the following 1002-residue polypeptide: Collagen alpha-2(I) chain (1002 aa).

Residues 1–1002 form a disordered region; it reads SGGFDFSFLP…PGPPGPPGAS (1002 aa). 4-hydroxyproline is present on residues Pro10, Pro13, Pro28, and Pro34. The segment covering 17-60 has biased composition (low complexity); sequence GPMGLMGPRGPPGASGAPGPQGFQGPAGEPGEPGQTGPAGARGP. At Lys89 the chain carries 5-hydroxylysine; alternate. The O-linked (Gal...) hydroxylysine; alternate glycan is linked to Lys89. Low complexity-rich tracts occupy residues 145–166 and 211–232; these read SRGSDGSVGPVGPAGPIGSAGP and PGANGLTGAKGAAGLPGVAGAP. Residues 266–275 show a composition bias toward gly residues; that stretch reads GESGGKGEPG. Over residues 276–286 the composition is skewed to low complexity; that stretch reads SAGPQGPPGSS. Residues 308 to 317 are compositionally biased toward gly residues; sequence GLRGGPGSRG. Residues 330–346 are compositionally biased toward low complexity; that stretch reads PAGARGASGPAGVRGPS. A 4-hydroxyproline mark is found at Pro352 and Pro355. Over residues 381–400 the composition is skewed to low complexity; the sequence is LPGIDGRPGPIGPAGARGEA. Residues 449–458 are compositionally biased toward gly residues; sequence GVQGGKGEQG. Composition is skewed to low complexity over residues 505 to 522 and 534 to 544; these read PGESGAVGPSGAIGSRGP and EPGVVGAPGTA. Residues 545–554 show a composition bias toward gly residues; that stretch reads GPAGSGGLPG. 2 stretches are compositionally biased toward low complexity: residues 577–621 and 628–648; these read VGTT…PRGS and VGPAGPNGFAGPAGAAGQPGA. Basic and acidic residues predominate over residues 649-658; that stretch reads KGERGTKGPK. The span at 666–676 shows a compositional bias: low complexity; the sequence is PTGPVGSAGPA. Positions 686-695 are enriched in gly residues; it reads GSRGDGGPPG. The span at 697–706 shows a compositional bias: low complexity; the sequence is TGFPGAAGRT. Residues 743–752 are compositionally biased toward gly residues; it reads GETGAGGPPG. Composition is skewed to low complexity over residues 760-787 and 795-805; these read SGEPGTAGPPGTAGPQGLLGAPGILGLP and LPGVAGAVGEP. A compositionally biased stretch (gly residues) spans 806-828; sequence GPLGIGPPGARGPSGGVGPGVNG. The segment covering 833–851 has biased composition (basic and acidic residues); the sequence is AGRDGPPGRDGLPGHKGER. Residues 853–898 show a composition bias toward low complexity; sequence YAGNAGPVGAAGAPGPHGAVGPAGKHGNRGEPGPVGSAGPVGALGP. Residues 908 to 919 are compositionally biased toward basic and acidic residues; it reads RGDKGEAGDKGP. A compositionally biased stretch (pro residues) spans 987 to 1002; that stretch reads SGPPGPPGPPGPPGAS.

The protein belongs to the fibrillar collagen family. As to quaternary structure, trimers of one alpha 2(I) and two alpha 1(I) chains. Interacts (via C-terminus) with TMEM131 (via PapD-L domain); the interaction is direct and is involved in assembly and TRAPPIII ER-to-Golgi transport complex-dependent secretion of collagen. In terms of processing, prolines at the third position of the tripeptide repeating unit (G-X-Y) are hydroxylated in some or all of the chains. As to expression, expressed in bones.

The protein resides in the secreted. It localises to the extracellular space. Its subcellular location is the extracellular matrix. Its function is as follows. Type I collagen is a member of group I collagen (fibrillar forming collagen). The chain is Collagen alpha-2(I) chain from Glossotherium robustum (Ground sloth).